Here is a 488-residue protein sequence, read N- to C-terminus: R3H and coiled-coil domain-containing protein 1 (488 aa).

The R3H domain maps to 16–81; it reads NDFVHRVQEE…KRRTVICHLD (66 aa). Disordered regions lie at residues 87 to 180 and 195 to 322; these read SDGP…GDAE and KSPD…DADH. Residues 114 to 125 show a composition bias toward low complexity; the sequence is GAAAGPRGAPAG. Ser232 carries the post-translational modification Phosphoserine. A coiled-coil region spans residues 244 to 321; that stretch reads SHGMRSLVDQ…EEDEDEADAD (78 aa). Positions 252–265 are enriched in acidic residues; that stretch reads DQEEEEIEGEEEEK. 2 stretches are compositionally biased toward basic and acidic residues: residues 266–280 and 287–301; these read VDEKEEDTGKQKERV and TDAQEGKVDSEGERM. Positions 302–319 are enriched in acidic residues; it reads DEGEDKVDAEEEDEDEAD.

This Mus musculus (Mouse) protein is R3H and coiled-coil domain-containing protein 1.